We begin with the raw amino-acid sequence, 184 residues long: ATP synthase subunit delta (184 aa).

It belongs to the ATPase delta chain family. F-type ATPases have 2 components, F(1) - the catalytic core - and F(0) - the membrane proton channel. F(1) has five subunits: alpha(3), beta(3), gamma(1), delta(1), epsilon(1). F(0) has three main subunits: a(1), b(2) and c(10-14). The alpha and beta chains form an alternating ring which encloses part of the gamma chain. F(1) is attached to F(0) by a central stalk formed by the gamma and epsilon chains, while a peripheral stalk is formed by the delta and b chains.

The protein localises to the cell inner membrane. F(1)F(0) ATP synthase produces ATP from ADP in the presence of a proton or sodium gradient. F-type ATPases consist of two structural domains, F(1) containing the extramembraneous catalytic core and F(0) containing the membrane proton channel, linked together by a central stalk and a peripheral stalk. During catalysis, ATP synthesis in the catalytic domain of F(1) is coupled via a rotary mechanism of the central stalk subunits to proton translocation. Functionally, this protein is part of the stalk that links CF(0) to CF(1). It either transmits conformational changes from CF(0) to CF(1) or is implicated in proton conduction. In Rickettsia peacockii (strain Rustic), this protein is ATP synthase subunit delta.